The primary structure comprises 137 residues: Endoribonuclease YbeY (137 aa).

Zn(2+) is bound by residues histidine 105, histidine 109, and aspartate 115.

The protein belongs to the endoribonuclease YbeY family. Zn(2+) is required as a cofactor.

The protein resides in the cytoplasm. Single strand-specific metallo-endoribonuclease involved in late-stage 70S ribosome quality control and in maturation of the 3' terminus of the 16S rRNA. This chain is Endoribonuclease YbeY, found in Chlorobaculum tepidum (strain ATCC 49652 / DSM 12025 / NBRC 103806 / TLS) (Chlorobium tepidum).